A 52-amino-acid polypeptide reads, in one-letter code: MSRDLVTIPRDVWNDIQGYIDSLERENDSLKNQLMEADEYVAELEEKLNGTS.

Its function is as follows. Plays a role in the inhibition of the host RecBCD complex (also called exonuclease V). A double mutation in this protein and the nucleotide kinase gp1.7 protein allows phage to overcome the retron Ec48 bacteriophage defense system. Overexpression of the wild-type gp5.9 protein in E.coli with an intact Ec48 retron leads to a dramatic decrease in cell counts consistent with cell death, the L23P mutant does not have this effect. In Escherichia phage T7 (Bacteriophage T7), this protein is Probable RecBCD inhibitor gp5.9.